We begin with the raw amino-acid sequence, 152 residues long: Peptide deformylase (152 aa).

The Fe cation site is built by cysteine 88 and histidine 130. Glutamate 131 is a catalytic residue. Histidine 134 lines the Fe cation pocket.

The protein belongs to the polypeptide deformylase family. Fe(2+) serves as cofactor.

The enzyme catalyses N-terminal N-formyl-L-methionyl-[peptide] + H2O = N-terminal L-methionyl-[peptide] + formate. In terms of biological role, removes the formyl group from the N-terminal Met of newly synthesized proteins. Requires at least a dipeptide for an efficient rate of reaction. N-terminal L-methionine is a prerequisite for activity but the enzyme has broad specificity at other positions. The protein is Peptide deformylase of Carboxydothermus hydrogenoformans (strain ATCC BAA-161 / DSM 6008 / Z-2901).